A 269-amino-acid chain; its full sequence is UPF0162 protein BUsg_167 (269 aa).

This sequence belongs to the UPF0162 family.

This Buchnera aphidicola subsp. Schizaphis graminum (strain Sg) protein is UPF0162 protein BUsg_167.